The chain runs to 276 residues: NH(3)-dependent NAD(+) synthetase (276 aa).

Position 43 to 50 (43 to 50 (GISGGVDS)) interacts with ATP. D49 provides a ligand contact to Mg(2+). Residue R146 coordinates deamido-NAD(+). Position 166 (T166) interacts with ATP. E171 lines the Mg(2+) pocket. Positions 179 and 186 each coordinate deamido-NAD(+). ATP-binding residues include K195 and T217. 266–267 (HK) lines the deamido-NAD(+) pocket.

The protein belongs to the NAD synthetase family. In terms of assembly, homodimer.

The catalysed reaction is deamido-NAD(+) + NH4(+) + ATP = AMP + diphosphate + NAD(+) + H(+). It participates in cofactor biosynthesis; NAD(+) biosynthesis; NAD(+) from deamido-NAD(+) (ammonia route): step 1/1. In terms of biological role, catalyzes the ATP-dependent amidation of deamido-NAD to form NAD. Uses ammonia as a nitrogen source. The protein is NH(3)-dependent NAD(+) synthetase of Shewanella woodyi (strain ATCC 51908 / MS32).